The sequence spans 261 residues: DNA repair protein RecO (261 aa).

It belongs to the RecO family.

In terms of biological role, involved in DNA repair and RecF pathway recombination. The sequence is that of DNA repair protein RecO from Gloeobacter violaceus (strain ATCC 29082 / PCC 7421).